Reading from the N-terminus, the 476-residue chain is Riboflavin transporter rft-2 (476 aa).

Residues 1–21 (MGCSAATFILVALFGSSSWMG) form a helical membrane-spanning segment. At 22 to 41 (TNSVWMQLPLLTSELPEQWN) the chain is on the cytoplasmic side. A helical membrane pass occupies residues 42–62 (LPSYLAGVVQIACIVPLIYTI). At 63 to 75 (LHKGVKSFTIPTA) the chain is on the extracellular side. Residues 76–96 (PLIIALLSLACCCQLGLSFFW) traverse the membrane as a helical segment. Residues 97–113 (SDYSEIFGAPRSWPLYS) lie on the Cytoplasmic side of the membrane. Residues 114–134 (LLFGLAIVNAMSNVLFMPFMA) traverse the membrane as a helical segment. Residues 135-140 (QFHPAY) are Extracellular-facing. The chain crosses the membrane as a helical span at residues 141 to 161 (LNAYFVGMGLSSLAPSLLSLA). The Cytoplasmic portion of the chain corresponds to 162-185 (QGTSMFKCDEKGVAERFPPNFSVS). Residues 186 to 206 (IFFFVIFSFTCVALFAFIALY) form a helical membrane-spanning segment. The Extracellular portion of the chain corresponds to 207-306 (RSGAHTHFAT…HPVDYITGVK (100 aa)). The tract at residues 215–249 (ATPNKKEPNEGTPLKKDLNNTSSSRKGDDEDESPI) is disordered. The span at 218 to 232 (NKKEPNEGTPLKKDL) shows a compositional bias: basic and acidic residues. The N-linked (GlcNAc...) asparagine glycan is linked to N233. Residues 307 to 327 (FTFLLFTTALVNAQMNGIITS) traverse the membrane as a helical segment. The Cytoplasmic segment spans residues 328-342 (VQSYAALPYSQATYH). The helical transmembrane segment at 343 to 363 (FAVTLSNVVSPLSSFLPFFIS) threads the bilayer. At 364–366 (VRS) the chain is on the extracellular side. The chain crosses the membrane as a helical span at residues 367-387 (IPVLAILTACSTAMTAFIVYL). At 388 to 393 (AALSPN) the chain is on the cytoplasmic side. Residues 394 to 414 (LIFNSVTIGSALSIGGSLIAA) traverse the membrane as a helical segment. Residues 415 to 437 (GLHSYLRVVFASLLREGHQSESR) lie on the Extracellular side of the membrane. The chain crosses the membrane as a helical span at residues 438–458 (LFWCGVFIQIGSFIGSAVMFP). The Cytoplasmic segment spans residues 459–476 (LVNIAHLFTSAPQCKSIS).

It belongs to the riboflavin transporter family. As to expression, expressed in intestine and pharynx.

It is found in the cell membrane. The catalysed reaction is riboflavin(in) = riboflavin(out). In terms of biological role, riboflavin transporter. The chain is Riboflavin transporter rft-2 from Caenorhabditis elegans.